Reading from the N-terminus, the 595-residue chain is FERM domain-containing protein 3 (595 aa).

In terms of domain architecture, FERM spans 32–312 (MKCTIRLLDD…ENQAFYKYAK (281 aa)). The helical transmembrane segment at 529 to 549 (LLVVGLGLLLFVFPLLLLLLE) threads the bilayer.

The protein localises to the membrane. Putative tumor suppressor gene that may be implicated in the origin and progression of lung cancer. This chain is FERM domain-containing protein 3 (Frmd3), found in Mus musculus (Mouse).